We begin with the raw amino-acid sequence, 369 residues long: Homoserine O-succinyltransferase (369 aa).

The interval 90 to 93 (GISA) is important for substrate specificity. The 247-residue stretch at 107–353 (WWSGAVGVRA…YGHDAFLKED (247 aa)) folds into the AB hydrolase-1 domain. The active-site Nucleophile is the S175. R236 lines the substrate pocket. Residues D316 and H346 contribute to the active site. Residue D347 coordinates substrate.

It belongs to the AB hydrolase superfamily. MetX family. In terms of assembly, homodimer.

It is found in the cytoplasm. The enzyme catalyses L-homoserine + succinyl-CoA = O-succinyl-L-homoserine + CoA. The protein operates within amino-acid biosynthesis; L-methionine biosynthesis via de novo pathway; O-succinyl-L-homoserine from L-homoserine: step 1/1. Functionally, transfers a succinyl group from succinyl-CoA to L-homoserine, forming succinyl-L-homoserine. The sequence is that of Homoserine O-succinyltransferase from Brevundimonas diminuta (strain ATCC 11568 / DSM 7234 / NBRC 12697 / NCIMB 9393 / NCTC 8545).